Here is a 786-residue protein sequence, read N- to C-terminus: LPS-assembly protein LptD (786 aa).

The N-terminal stretch at 1 to 24 (MKKRIPTLLATMIASALYSHQGLA) is a signal peptide. Disulfide bonds link Cys-31–Cys-726 and Cys-173–Cys-727.

Belongs to the LptD family. As to quaternary structure, component of the lipopolysaccharide transport and assembly complex. Interacts with LptE and LptA. Contains two intramolecular disulfide bonds.

It localises to the cell outer membrane. Together with LptE, is involved in the assembly of lipopolysaccharide (LPS) at the surface of the outer membrane. The protein is LPS-assembly protein LptD of Salmonella choleraesuis (strain SC-B67).